Consider the following 274-residue polypeptide: Thymidylate synthase (274 aa).

DUMP is bound at residue Arg-21. His-51 lines the (6R)-5,10-methylene-5,6,7,8-tetrahydrofolate pocket. Residue 123 to 124 (RR) coordinates dUMP. The active-site Nucleophile is Cys-156. DUMP contacts are provided by residues 176-179 (RSAD), Asn-187, and 217-219 (HIY). Asp-179 serves as a coordination point for (6R)-5,10-methylene-5,6,7,8-tetrahydrofolate. Residue Ala-273 participates in (6R)-5,10-methylene-5,6,7,8-tetrahydrofolate binding.

Belongs to the thymidylate synthase family. Bacterial-type ThyA subfamily. In terms of assembly, homodimer.

The protein resides in the cytoplasm. It catalyses the reaction dUMP + (6R)-5,10-methylene-5,6,7,8-tetrahydrofolate = 7,8-dihydrofolate + dTMP. It participates in pyrimidine metabolism; dTTP biosynthesis. Catalyzes the reductive methylation of 2'-deoxyuridine-5'-monophosphate (dUMP) to 2'-deoxythymidine-5'-monophosphate (dTMP) while utilizing 5,10-methylenetetrahydrofolate (mTHF) as the methyl donor and reductant in the reaction, yielding dihydrofolate (DHF) as a by-product. This enzymatic reaction provides an intracellular de novo source of dTMP, an essential precursor for DNA biosynthesis. The sequence is that of Thymidylate synthase from Christiangramia forsetii (strain DSM 17595 / CGMCC 1.15422 / KT0803) (Gramella forsetii).